Reading from the N-terminus, the 101-residue chain is Small ribosomal subunit protein eS24 (101 aa).

Belongs to the eukaryotic ribosomal protein eS24 family.

The sequence is that of Small ribosomal subunit protein eS24 from Methanosarcina barkeri (strain Fusaro / DSM 804).